We begin with the raw amino-acid sequence, 184 residues long: Thymidine kinase (184 aa).

ATP-binding positions include 10-17 (GPMYSGKT) and 83-86 (DEVQ). Residue Glu84 is the Proton acceptor of the active site. Cys140, Cys143, Cys173, and Cys176 together coordinate Zn(2+).

The protein belongs to the thymidine kinase family. Homotetramer.

It localises to the cytoplasm. It carries out the reaction thymidine + ATP = dTMP + ADP + H(+). The sequence is that of Thymidine kinase from Thermotoga petrophila (strain ATCC BAA-488 / DSM 13995 / JCM 10881 / RKU-1).